Here is a 273-residue protein sequence, read N- to C-terminus: DNA repair protein RecO (273 aa).

This sequence belongs to the RecO family.

In terms of biological role, involved in DNA repair and RecF pathway recombination. This Saccharopolyspora erythraea (strain ATCC 11635 / DSM 40517 / JCM 4748 / NBRC 13426 / NCIMB 8594 / NRRL 2338) protein is DNA repair protein RecO.